The primary structure comprises 136 residues: Nucleoside diphosphate kinase (136 aa).

Residues Lys10, Phe58, Arg86, Thr92, Arg104, and Asn114 each contribute to the ATP site. The active-site Pros-phosphohistidine intermediate is the His117.

Belongs to the NDK family. Homotetramer. Mg(2+) is required as a cofactor.

It is found in the cytoplasm. It carries out the reaction a 2'-deoxyribonucleoside 5'-diphosphate + ATP = a 2'-deoxyribonucleoside 5'-triphosphate + ADP. It catalyses the reaction a ribonucleoside 5'-diphosphate + ATP = a ribonucleoside 5'-triphosphate + ADP. Major role in the synthesis of nucleoside triphosphates other than ATP. The ATP gamma phosphate is transferred to the NDP beta phosphate via a ping-pong mechanism, using a phosphorylated active-site intermediate. In Mycobacterium avium (strain 104), this protein is Nucleoside diphosphate kinase.